Here is a 702-residue protein sequence, read N- to C-terminus: K(+)-insensitive pyrophosphate-energized proton pump (702 aa).

Transmembrane regions (helical) follow at residues 3-23 (GIYLFVVAAALAALGYGALTI), 63-83 (AVVFVILTALLGISVGFGFLI), 130-150 (MLVAGLALLSVAFYYILLVGI), and 162-182 (VALGFGASLISIFARLGGGIF). Lys184 is a binding site for substrate. Residues Asp187, Asp191, Asn214, and Asp217 each contribute to the Mg(2+) site. 6 consecutive transmembrane segments (helical) span residues 234–254 (AVTVVATMVLASIFFAGVPAM), 255–275 (TSMMAYPLAIGGVCILASILG), 294–314 (GFLVSAGASFVGIILATAIVP), 329–349 (GFDLFLCAVIGLLVTGLLIWV), 379–399 (GLAISMEATALPALIICAAII), and 407–427 (LFGIAITVTSMLALAGMVVAL). Asp435 contributes to the Mg(2+) binding site. The next 4 helical transmembrane spans lie at 466 to 486 (AVTKGYAIGSAGLGALVLFAA), 517 to 537 (YVVVGLFIGGLLPYLFGSMGM), 586 to 606 (IIPSLLPVLAPIVLYFVILGI), and 612 to 632 (AFSALGAMLLGVIVTGLFVAI). Ca(2+) is bound by residues Asp642, Asp668, and Asp672. Lys675 is a binding site for substrate.

This sequence belongs to the H(+)-translocating pyrophosphatase (TC 3.A.10) family. K(+)-insensitive subfamily. In terms of assembly, homodimer. Mg(2+) serves as cofactor.

It localises to the cell inner membrane. The catalysed reaction is diphosphate + H2O + H(+)(in) = 2 phosphate + 2 H(+)(out). Functionally, proton pump that utilizes the energy of pyrophosphate hydrolysis as the driving force for proton movement across the membrane. Generates a proton motive force. This Rhodospirillum rubrum (strain ATCC 11170 / ATH 1.1.1 / DSM 467 / LMG 4362 / NCIMB 8255 / S1) protein is K(+)-insensitive pyrophosphate-energized proton pump.